Consider the following 147-residue polypeptide: Large-conductance mechanosensitive channel (147 aa).

Helical transmembrane passes span 8–28 and 81–101; these read FIMK…AAFG and GIFL…FMII.

The protein belongs to the MscL family. As to quaternary structure, homopentamer.

Its subcellular location is the cell inner membrane. Its function is as follows. Channel that opens in response to stretch forces in the membrane lipid bilayer. May participate in the regulation of osmotic pressure changes within the cell. The chain is Large-conductance mechanosensitive channel from Trichlorobacter lovleyi (strain ATCC BAA-1151 / DSM 17278 / SZ) (Geobacter lovleyi).